A 400-amino-acid polypeptide reads, in one-letter code: Golgin-45 (400 aa).

Residues 1 to 36 (MEKMTTLKSFESKGILTSTPIRGAGDGMETEEPPKS) form a disordered region. Residues 22–26 (RGAGD) carry the Tankyrase-binding motif motif. Ser-53 carries the post-translational modification Phosphoserine. Residues 126–263 (LSEVKKVLEK…LSEREQFRQE (138 aa)) are a coiled coil. Phosphoserine is present on Ser-356. The segment at 394–400 (QGELLAL) is essential for interaction with GORASP2.

Interacts with GORASP2. Interacts with the GTP-bound form of RAB2, but not with other Golgi Rab proteins. Identified in a complex with RAB2 and GORASP2. ADP-ribosylated by tankyrase TNKS and TNKS2. Poly-ADP-ribosylated protein is recognized by RNF146, followed by ubiquitination. In terms of processing, ubiquitinated by RNF146 when poly-ADP-ribosylated, leading to its degradation.

It localises to the golgi apparatus membrane. Functionally, required for normal Golgi structure and for protein transport from the endoplasmic reticulum (ER) through the Golgi apparatus to the cell surface. This Rattus norvegicus (Rat) protein is Golgin-45.